The chain runs to 338 residues: Lumican (338 aa).

A signal peptide spans 1–18 (MNVCAFSLALALVGSVSG). Pyrrolidone carboxylic acid is present on glutamine 19. Residues tyrosine 20, tyrosine 21, tyrosine 23, and tyrosine 30 each carry the sulfotyrosine modification. One can recognise an LRRNT domain in the interval 28 to 66 (FMYGQISPNCAPECNCPHSYPTAMYCDDLKLKSVPMVPP). LRR repeat units lie at residues 67–88 (GIKY…AFEN), 91–114 (DLQW…VFSK), 117–137 (QLKK…PLPK), 138–159 (SLQD…DGLV), 160–181 (NLTF…ASLK), 185–205 (SLEY…GLPT), 206–227 (SLLT…YFKR), and 230–250 (GLQY…PGNS). An N-linked (GlcNAc...) (keratan sulfate) asparagine glycan is attached at asparagine 88. A glycan (N-linked (GlcNAc...) (keratan sulfate) asparagine) is linked at asparagine 127. Asparagine 160 carries N-linked (GlcNAc...) (keratan sulfate) asparagine glycosylation. Asparagine 252 carries an N-linked (GlcNAc...) (keratan sulfate) asparagine glycan. 2 LRR repeats span residues 255–276 (SLLE…NENL) and 277–296 (ENYY…SFCK). An intrachain disulfide couples cysteine 295 to cysteine 328. At serine 304 the chain carries Phosphoserine. An LRR 11 repeat occupies 305–326 (KIKHLRLDGNPLTQSSLPPDMY).

Belongs to the small leucine-rich proteoglycan (SLRP) family. SLRP class II subfamily. As to quaternary structure, binds to laminin. Contains keratan sulfate. Post-translationally, cys-37, Cys-41, Cys-43 and Cys-53 are involved in disulfide bonds. As to expression, cornea and other tissues.

Its subcellular location is the secreted. It localises to the extracellular space. It is found in the extracellular matrix. The protein is Lumican (Lum) of Mus musculus (Mouse).